We begin with the raw amino-acid sequence, 424 residues long: Anaerobic glycerol-3-phosphate dehydrogenase subunit B (424 aa).

This sequence belongs to the anaerobic G-3-P dehydrogenase subunit B family. In terms of assembly, composed of a catalytic GlpA/B dimer and of membrane bound GlpC. FMN is required as a cofactor.

The catalysed reaction is a quinone + sn-glycerol 3-phosphate = dihydroxyacetone phosphate + a quinol. The protein operates within polyol metabolism; glycerol degradation via glycerol kinase pathway; glycerone phosphate from sn-glycerol 3-phosphate (anaerobic route): step 1/1. In terms of biological role, conversion of glycerol 3-phosphate to dihydroxyacetone. Uses fumarate or nitrate as electron acceptor. The polypeptide is Anaerobic glycerol-3-phosphate dehydrogenase subunit B (Yersinia enterocolitica serotype O:8 / biotype 1B (strain NCTC 13174 / 8081)).